A 46-amino-acid chain; its full sequence is Major cold-shock protein (46 aa).

Residues 1-46 form the CSD domain; that stretch reads EKGFGFISPADGSKDVFVHFSAIQSTSFKTLDEGQRVEFTIEQGQK.

In terms of assembly, homodimer.

The protein resides in the cytoplasm. This chain is Major cold-shock protein (cspA), found in Aeromonas salmonicida.